A 57-amino-acid polypeptide reads, in one-letter code: Sec-independent protein translocase protein TatAy (57 aa).

A helical membrane pass occupies residues 1–21 (MPIGPGSLAVIAIVALIIFGP).

Belongs to the TatA/E family. In terms of assembly, forms a complex with TatCy. Two types of complexes exist: one composed of TatAy and TatCy, and another composed only of TatAy. Cytosolic TatA forms large complexes or aggregates.

The protein resides in the cell membrane. Its subcellular location is the cytoplasm. It localises to the cytosol. Its function is as follows. Part of the twin-arginine translocation (Tat) system that transports large folded proteins containing a characteristic twin-arginine motif in their signal peptide across membranes. TatA could form the protein-conducting channel of the Tat system. Required for YwbN secretion. This is Sec-independent protein translocase protein TatAy from Bacillus subtilis (strain 168).